The following is a 1436-amino-acid chain: Probable deoxyribonuclease RhsB (1436 aa).

The interval 16–42 (HAGNRPNPPADRPQPCQGKPPTSPGKT) is disordered. The next 2 helical transmembrane spans lie at 48–68 (FLGALAGAVAGALVAAAVAAA) and 70–90 (VFLVGVTGGLAVAAVGALAVF). 5 YD repeats span residues 486 to 521 (YNTAHRLTRWHDNDQTWARYEYDAQGRCVYTTCADG), 569 to 605 (YDEVGNLLREISPAGRVVEFTYLDDTGRVSTFTDGSG), 612 to 647 (YDDAQRLCGVTDPLGREWGWVYDAEGNPERLTGPDA), 766 to 799 (DLLTARTDAEGRTWRYEYDRESQQLIAVTAPDGS), and 847 to 879 (YDARGLLLRETAPDDTLHYRYDAAGRLTEVSSA).

Belongs to the RHS/WapA nuclease family.

Its subcellular location is the membrane. In terms of biological role, toxic component of a toxin-immunity protein module, which functions as a cellular contact-dependent growth inhibition (CDI) system. This protein may be a nuclease that is specifically inhibited by its cognate immunity protein RhsBI. Upon expression of the C-terminus (residues 1284-1436) in E.coli growth is inhibited, cells elongate, nucleoids condense and plasmid DNA is degraded; these effects are blocked specifically by cognate immunity protein RshIB. Cell contact is necessary for growth inhibition. The protein is Probable deoxyribonuclease RhsB (rhsB) of Dickeya dadantii (strain 3937) (Erwinia chrysanthemi (strain 3937)).